We begin with the raw amino-acid sequence, 317 residues long: Flagellar hook-associated protein 3 (317 aa).

The protein belongs to the bacterial flagellin family.

The protein localises to the secreted. It is found in the bacterial flagellum. This chain is Flagellar hook-associated protein 3 (flgL), found in Escherichia coli (strain K12).